We begin with the raw amino-acid sequence, 115 residues long: Large ribosomal subunit protein bL19 (115 aa).

It belongs to the bacterial ribosomal protein bL19 family.

Functionally, this protein is located at the 30S-50S ribosomal subunit interface and may play a role in the structure and function of the aminoacyl-tRNA binding site. This chain is Large ribosomal subunit protein bL19, found in Pectobacterium carotovorum subsp. carotovorum (strain PC1).